Consider the following 377-residue polypeptide: Guanine nucleotide-binding protein subunit beta (377 aa).

WD repeat units lie at residues 63–93 (GHTG…IVWN), 105–135 (LPCA…SIFS), 154–185 (GHRG…ILWD), 202–233 (GHTA…RLWD), 246–276 (GHEG…RLYD), 292–323 (GENG…YVWD), and 339–369 (SHRN…KIWA). 2 short sequence motifs (DWD box) span residues 220-235 (FISG…WDTR) and 263-278 (FGTG…YDIR).

This sequence belongs to the WD repeat G protein beta family. G proteins are composed of 3 units, alpha, beta and gamma. Interacts with the gamma subunits GG1 and GG2. The dimers GB1-GG1 and GB1-GG2 interact with NDL1, NDL2 and NDL3. Interacts with WNK8. Interacts with XLG2. Interacts with RACK1A, RACK1B and RACK1C. Interacts with ZAR1 (via GBeta-binding domain). Expressed in seedlings (especially at the hypocotyl/root junction), roots, leaves (restricted to veins and guard cells), and flowers. Also present in hydathods. Expressed in guard cells, mesophyll tissue of cotyledons, trichomes and whole siliques, but not in seeds.

It localises to the cell membrane. The protein localises to the cytoplasm. Its subcellular location is the nucleus. In terms of biological role, guanine nucleotide-binding proteins (G proteins) are involved as a modulator or transducer in various transmembrane signaling systems. The beta and gamma chains are required for the GTPase activity, for replacement of GDP by GTP, and for G protein-effector interaction. The heterotrimeric G-protein controls defense responses to necrotrophic and vascular fungi probably by modulating cell wall-related genes expression (e.g. lower xylose content in cell walls); involved in resistance to fungal pathogens such as Alternaria brassicicola and Fusarium oxysporum. Modulates root architecture (e.g. lateral root formation). Acts with XGL3 in the positive regulation of root waving and root skewing. Involved in the asymmetric division of zygote and specification of apical and basal cell lineages. The sequence is that of Guanine nucleotide-binding protein subunit beta (GB1) from Arabidopsis thaliana (Mouse-ear cress).